The following is an 866-amino-acid chain: Pentatricopeptide repeat-containing protein At1g15510, chloroplastic (866 aa).

The transit peptide at 1–52 (MASSAQSPHFYLNPGKSNSFQSKAYKQRNVNFYWNFGIRRLFLRKSQGLSVL) directs the protein to the chloroplast. PPR repeat units lie at residues 58 to 92 (STHFSNSQLHGLCANGKLEEAMKLLNSMQELRVAV), 93 to 123 (DEDVFVALVRLCEWKRAQEEGSKVYSIALSS), 128 to 158 (GVELGNAFLAMFVRFGNLVDAWYVFGKMSER), 159 to 194 (NLFSWNVLVGGYAKQGYFDEAMCLYHRMLWVGGVKP), 195 to 229 (DVYTFPCVLRTCGGIPDLARGKEVHVHVVRYGYEL), 230 to 260 (DIDVVNALITMYVKCGDVKSARLLFDRMPRR), 261 to 295 (DIISWNAMISGYFENGMCHEGLELFFAMRGLSVDP), 296 to 330 (DLMTLTSVISACELLGDRRLGRDIHAYVITTGFAV), 331 to 365 (DISVCNSLTQMYLNAGSWREAEKLFSRMERKDIVS), 366 to 396 (WTTMISGYEYNFLPDKAIDTYRMMDQDSVKP), 397 to 431 (DEITVAAVLSACATLGDLDTGVELHKLAIKARLIS), 432 to 466 (YVIVANNLINMYSKCKCIDKALDIFHNIPRKNVIS), 467 to 493 (WTSIIAGLRLNNRCFEALIFLRQMKMT), 497 to 531 (NAITLTAALAACARIGALMCGKEIHAHVLRTGVGL), 532 to 561 (DDFLPNALLDMYVRCGRMNTAWSQFNSQKK), 562 to 596 (DVTSWNILLTGYSERGQGSMVVELFDRMVKSRVRP), 597 to 631 (DEITFISLLCGCSKSQMVRQGLMYFSKMEDYGVTP), and 632 to 662 (NLKHYACVVDLLGRAGELQEAHKFIQKMPVT). The segment at 667 to 742 (VWGALLNACR…DAGCSWVEVK (76 aa)) is type E motif. The interval 743–773 (GKVHAFLSDDKYHPQTKEINTVLEGFYEKMS) is type E(+) motif. Residues 774 to 866 (EVGLTKISES…FKDGECSCGD (93 aa)) form a type DYW motif region.

Belongs to the PPR family. PCMP-H subfamily.

The protein resides in the plastid. It localises to the chloroplast. Regulates the RNA editing of the chloroplast transcript accD, and is essential for the early stages of chloroplast biogenesis. Required for the RNA editing of the chloroplast transcript ndhF. In Arabidopsis thaliana (Mouse-ear cress), this protein is Pentatricopeptide repeat-containing protein At1g15510, chloroplastic (PCMP-H73).